The primary structure comprises 225 residues: ATP-dependent Clp protease proteolytic subunit (225 aa).

Residue Ser123 is the Nucleophile of the active site. The active site involves His148.

This sequence belongs to the peptidase S14 family. Fourteen ClpP subunits assemble into 2 heptameric rings which stack back to back to give a disk-like structure with a central cavity, resembling the structure of eukaryotic proteasomes.

The protein resides in the cytoplasm. The catalysed reaction is Hydrolysis of proteins to small peptides in the presence of ATP and magnesium. alpha-casein is the usual test substrate. In the absence of ATP, only oligopeptides shorter than five residues are hydrolyzed (such as succinyl-Leu-Tyr-|-NHMec, and Leu-Tyr-Leu-|-Tyr-Trp, in which cleavage of the -Tyr-|-Leu- and -Tyr-|-Trp bonds also occurs).. Cleaves peptides in various proteins in a process that requires ATP hydrolysis. Has a chymotrypsin-like activity. Plays a major role in the degradation of misfolded proteins. The sequence is that of ATP-dependent Clp protease proteolytic subunit from Chlorobium luteolum (strain DSM 273 / BCRC 81028 / 2530) (Pelodictyon luteolum).